The primary structure comprises 178 residues: ATP-dependent protease subunit HslV (178 aa).

The active site involves Thr-8. 3 residues coordinate Na(+): Gly-163, Cys-166, and Thr-169.

Belongs to the peptidase T1B family. HslV subfamily. As to quaternary structure, a double ring-shaped homohexamer of HslV is capped on each side by a ring-shaped HslU homohexamer. The assembly of the HslU/HslV complex is dependent on binding of ATP.

The protein localises to the cytoplasm. It carries out the reaction ATP-dependent cleavage of peptide bonds with broad specificity.. Allosterically activated by HslU binding. In terms of biological role, protease subunit of a proteasome-like degradation complex believed to be a general protein degrading machinery. This chain is ATP-dependent protease subunit HslV, found in Treponema denticola (strain ATCC 35405 / DSM 14222 / CIP 103919 / JCM 8153 / KCTC 15104).